Consider the following 179-residue polypeptide: MSSIDPPAGHTRPIVFFDISIGDTPAGRIKMELFDDITPKTAENFRQLCTGEHRINSVPQGYKKATFHRVIPQFMVQGGDFVRGDGTGSFSIYGAQFEDENFKVKHTGPGLLSMANSGPNTNGCQFFITTAPAEFLDGKHCVFGRVIDGLLTVRKIENVPTGANNRPKLQVRIAECGEM.

Positions 16 to 178 (FFDISIGDTP…LQVRIAECGE (163 aa)) constitute a PPIase cyclophilin-type domain.

This sequence belongs to the cyclophilin-type PPIase family. PPIase H subfamily.

It localises to the nucleus. The catalysed reaction is [protein]-peptidylproline (omega=180) = [protein]-peptidylproline (omega=0). In terms of biological role, PPIases accelerate the folding of proteins. It catalyzes the cis-trans isomerization of proline imidic peptide bonds in oligopeptides. This chain is Peptidyl-prolyl cis-trans isomerase H (CYP3), found in Cryptococcus neoformans var. neoformans serotype D (strain B-3501A) (Filobasidiella neoformans).